Reading from the N-terminus, the 436-residue chain is Methylenetetrahydrofolate--tRNA-(uracil-5-)-methyltransferase TrmFO (436 aa).

8–13 serves as a coordination point for FAD; it reads GGGLAG.

The protein belongs to the MnmG family. TrmFO subfamily. Requires FAD as cofactor.

It localises to the cytoplasm. The catalysed reaction is uridine(54) in tRNA + (6R)-5,10-methylene-5,6,7,8-tetrahydrofolate + NADH + H(+) = 5-methyluridine(54) in tRNA + (6S)-5,6,7,8-tetrahydrofolate + NAD(+). The enzyme catalyses uridine(54) in tRNA + (6R)-5,10-methylene-5,6,7,8-tetrahydrofolate + NADPH + H(+) = 5-methyluridine(54) in tRNA + (6S)-5,6,7,8-tetrahydrofolate + NADP(+). Catalyzes the folate-dependent formation of 5-methyl-uridine at position 54 (M-5-U54) in all tRNAs. This Syntrophomonas wolfei subsp. wolfei (strain DSM 2245B / Goettingen) protein is Methylenetetrahydrofolate--tRNA-(uracil-5-)-methyltransferase TrmFO.